The following is a 506-amino-acid chain: Maturase K (506 aa).

Belongs to the intron maturase 2 family. MatK subfamily.

The protein localises to the plastid. Its subcellular location is the chloroplast. Functionally, usually encoded in the trnK tRNA gene intron. Probably assists in splicing its own and other chloroplast group II introns. This Lathyrus sativus (White vetchling) protein is Maturase K.